Here is a 462-residue protein sequence, read N- to C-terminus: tRNA modification GTPase MnmE (462 aa).

Positions 23, 88, and 127 each coordinate (6S)-5-formyl-5,6,7,8-tetrahydrofolate. A TrmE-type G domain is found at 224 to 383 (GLATVIIGRP…LEKAIADLFF (160 aa)). Asn234 lines the K(+) pocket. GTP contacts are provided by residues 234–239 (NVGKSS), 253–259 (TDIPGTT), and 278–281 (DTAG). Ser238 is a binding site for Mg(2+). Residues Thr253, Ile255, and Thr258 each contribute to the K(+) site. Position 259 (Thr259) interacts with Mg(2+). A (6S)-5-formyl-5,6,7,8-tetrahydrofolate-binding site is contributed by Lys462.

The protein belongs to the TRAFAC class TrmE-Era-EngA-EngB-Septin-like GTPase superfamily. TrmE GTPase family. In terms of assembly, homodimer. Heterotetramer of two MnmE and two MnmG subunits. It depends on K(+) as a cofactor.

The protein resides in the cytoplasm. Exhibits a very high intrinsic GTPase hydrolysis rate. Involved in the addition of a carboxymethylaminomethyl (cmnm) group at the wobble position (U34) of certain tRNAs, forming tRNA-cmnm(5)s(2)U34. The polypeptide is tRNA modification GTPase MnmE (Geobacillus kaustophilus (strain HTA426)).